Reading from the N-terminus, the 389-residue chain is UDP-D-apiose/UDP-D-xylose synthase 2 (389 aa).

NAD(+) is bound by residues Phe28, Ile29, Asp49, Asn76, Ile77, and Leu96. Tyr105, Thr139, Glu141, Arg182, and Tyr185 together coordinate UDP-alpha-D-glucuronate. Residues Tyr185 and Lys189 each contribute to the NAD(+) site. Catalysis depends on Tyr185, which acts as the Proton acceptor. Asn214 serves as a coordination point for UDP-alpha-D-glucuronate. Trp215 and Arg235 together coordinate NAD(+). Residues Lys251, Val253, Arg260, Tyr331, Tyr335, Asp337, and Arg341 each coordinate UDP-alpha-D-glucuronate.

This sequence belongs to the NAD(P)-dependent epimerase/dehydratase family. Homodimer and heterodimer with AXS1. NAD(+) serves as cofactor. In terms of tissue distribution, widely expressed with stronger expression in dark-grown seedlings, leaves and stems, and lower levels in flowers, siliques, pistils, pollen and roots.

The protein resides in the cytoplasm. It carries out the reaction UDP-alpha-D-glucuronate + H(+) = UDP-alpha-D-xylose + CO2. It catalyses the reaction UDP-alpha-D-glucuronate + H(+) = UDP-alpha-D-apiose + CO2. In terms of biological role, together with AXS1, catalyzes the conversion of UDP-D-glucuronate into a mixture of UDP-D-apiose (UDP-Api) as the main product and UDP-D-xylose to a lesser extent, via a cycle of oxidation and reduction. D-Apiose (3-C-hydroxymethyl-d-erythrose) is the only plant cell wall monosaccharide with a branched carbon skeleton and is found in rhamnogalacturonan II (RG-II), apiogalacturonan, and several apioglycosides. In Arabidopsis thaliana (Mouse-ear cress), this protein is UDP-D-apiose/UDP-D-xylose synthase 2.